A 757-amino-acid chain; its full sequence is Receptor protein kinase-like protein At4g34220 (757 aa).

Residues 1-26 (MTSNRSNLLFSLVLFHFLFVPTQLQA) form the signal peptide. LRR repeat units follow at residues 104–126 (YLRI…VFNA), 128–150 (ELQS…VNSV), 152–174 (NLQL…ISLL), 176–198 (NLTV…FEAA), 199–219 (QILD…LGGK), 220–242 (SLHY…FAEK), and 245–267 (ANAT…LSLL). A helical transmembrane segment spans residues 339–359 (IAAITVADIVGLAFIGLLVLY). A Protein kinase domain is found at 471 to 753 (KASAYILGTT…KELVQVLEKI (283 aa)). Position 473 is a phosphoserine (Ser473). Position 494 is a phosphothreonine (Thr494). Ser553 is subject to Phosphoserine. The tract at residues 633–654 (ARESHTTGPTSSSPYQPPEWST) is disordered. Phosphothreonine occurs at positions 638 and 639. Residues 638–654 (TTGPTSSSPYQPPEWST) are compositionally biased toward polar residues.

The protein belongs to the protein kinase superfamily.

It is found in the membrane. The polypeptide is Receptor protein kinase-like protein At4g34220 (Arabidopsis thaliana (Mouse-ear cress)).